We begin with the raw amino-acid sequence, 402 residues long: D-galactonate dehydratase family member RspA (402 aa).

Substrate is bound by residues Asn37 and His122. The Proton donor/acceptor role is filled by Tyr159. Position 210 (Asp210) interacts with Mg(2+). Residue His212 is the Proton donor/acceptor of the active site. 2 residues coordinate Mg(2+): Glu236 and Glu262. Glu262, Arg283, His312, Asp316, and Glu339 together coordinate substrate.

Belongs to the mandelate racemase/muconate lactonizing enzyme family. GalD subfamily. Requires Mg(2+) as cofactor.

The enzyme catalyses D-mannonate = 2-dehydro-3-deoxy-D-gluconate + H2O. Has low D-mannonate dehydratase activity (in vitro), suggesting that this is not a physiological substrate and that it has no significant role in D-mannonate degradation in vivo. Has no detectable activity with a panel of 70 other acid sugars (in vitro). The chain is D-galactonate dehydratase family member RspA (rspA) from Cellvibrio japonicus (strain Ueda107) (Pseudomonas fluorescens subsp. cellulosa).